The chain runs to 309 residues: D-alanine--D-alanine ligase (309 aa).

Positions 110-305 (KLCWTGAGLP…FQELVWHILE (196 aa)) constitute an ATP-grasp domain. 136–191 (RQALGFPVIVKPAEEGSSIGMSRAATAEELAQAWERASGYGCAVFAERWIDGVEYT) contacts ATP. Residues Asp-259, Glu-272, and Asn-274 each coordinate Mg(2+).

This sequence belongs to the D-alanine--D-alanine ligase family. Mg(2+) serves as cofactor. Mn(2+) is required as a cofactor.

The protein localises to the cytoplasm. It carries out the reaction 2 D-alanine + ATP = D-alanyl-D-alanine + ADP + phosphate + H(+). The protein operates within cell wall biogenesis; peptidoglycan biosynthesis. In terms of biological role, cell wall formation. The protein is D-alanine--D-alanine ligase of Methylococcus capsulatus (strain ATCC 33009 / NCIMB 11132 / Bath).